Here is a 135-residue protein sequence, read N- to C-terminus: S-adenosylmethionine decarboxylase proenzyme (135 aa).

Ser64 acts as the Schiff-base intermediate with substrate; via pyruvic acid in catalysis. The residue at position 64 (Ser64) is a Pyruvic acid (Ser); by autocatalysis. The active-site Proton acceptor; for processing activity is His69. Cys84 functions as the Proton donor; for catalytic activity in the catalytic mechanism.

This sequence belongs to the prokaryotic AdoMetDC family. Type 1 subfamily. As to quaternary structure, heterotetramer of two alpha and two beta chains arranged as a dimer of alpha/beta heterodimers. Requires pyruvate as cofactor. In terms of processing, is synthesized initially as an inactive proenzyme. Formation of the active enzyme involves a self-maturation process in which the active site pyruvoyl group is generated from an internal serine residue via an autocatalytic post-translational modification. Two non-identical subunits are generated from the proenzyme in this reaction, and the pyruvate is formed at the N-terminus of the alpha chain, which is derived from the carboxyl end of the proenzyme. The post-translation cleavage follows an unusual pathway, termed non-hydrolytic serinolysis, in which the side chain hydroxyl group of the serine supplies its oxygen atom to form the C-terminus of the beta chain, while the remainder of the serine residue undergoes an oxidative deamination to produce ammonia and the pyruvoyl group blocking the N-terminus of the alpha chain.

It catalyses the reaction S-adenosyl-L-methionine + H(+) = S-adenosyl 3-(methylsulfanyl)propylamine + CO2. It participates in amine and polyamine biosynthesis; S-adenosylmethioninamine biosynthesis; S-adenosylmethioninamine from S-adenosyl-L-methionine: step 1/1. In terms of biological role, catalyzes the decarboxylation of S-adenosylmethionine to S-adenosylmethioninamine (dcAdoMet), the propylamine donor required for the synthesis of the polyamines spermine and spermidine from the diamine putrescine. The protein is S-adenosylmethionine decarboxylase proenzyme of Aquifex aeolicus (strain VF5).